Consider the following 336-residue polypeptide: Ankyrin repeat and SOCS box protein 1 (336 aa).

6 ANK repeats span residues C37–E69, L78–L107, K111–G140, H144–V173, L192–F221, and S236–L266. One can recognise an SOCS box domain in the interval L287 to E336.

This sequence belongs to the ankyrin SOCS box (ASB) family. In terms of assembly, interacts with CUL5 and RNF7. In terms of tissue distribution, highest expression in testis, spleen, bone marrow and salivary gland.

It participates in protein modification; protein ubiquitination. Functionally, probable substrate-recognition component of a SCF-like ECS (Elongin-Cullin-SOCS-box protein) E3 ligase complex which mediates the ubiquitination and subsequent proteasomal degradation of target proteins. Mediates Notch-induced ubiquitination and degradation of TCF3/E2A and JAK2. May play a role in testis development. This is Ankyrin repeat and SOCS box protein 1 (Asb1) from Mus musculus (Mouse).